A 184-amino-acid chain; its full sequence is Protein DMP2 (184 aa).

4 helical membrane passes run 19 to 39, 45 to 65, 105 to 125, and 142 to 162; these read LIKL…PVLT, LLIN…SCCF, VGDF…SLLD, and IFLM…FTVF.

Belongs to the plant DMP1 protein family. Expressed constitutively in leaves, stems, flowers, siliques and roots.

It is found in the endoplasmic reticulum membrane. It localises to the vacuole membrane. Its function is as follows. Involved in membrane remodeling. The sequence is that of Protein DMP2 from Arabidopsis thaliana (Mouse-ear cress).